The primary structure comprises 218 residues: PKHD-type hydroxylase IL0759 (218 aa).

The Fe2OG dioxygenase domain maps to 76-170 (QVARVTINRY…RLAMIGWVQS (95 aa)). Positions 94, 96, and 151 each coordinate Fe cation. Arginine 161 contacts 2-oxoglutarate.

Fe(2+) serves as cofactor. Requires L-ascorbate as cofactor.

The chain is PKHD-type hydroxylase IL0759 from Idiomarina loihiensis (strain ATCC BAA-735 / DSM 15497 / L2-TR).